Reading from the N-terminus, the 124-residue chain is Fluoride-specific ion channel FluC (124 aa).

4 consecutive transmembrane segments (helical) span residues 5–25 (ILAV…AGTW), 37–57 (ATLA…GLFL), 69–89 (GLIV…LDTL), and 99–119 (LALG…WAGL). Na(+) is bound by residues glycine 76 and threonine 79.

Belongs to the fluoride channel Fluc/FEX (TC 1.A.43) family.

The protein localises to the cell inner membrane. The catalysed reaction is fluoride(in) = fluoride(out). Its activity is regulated as follows. Na(+) is not transported, but it plays an essential structural role and its presence is essential for fluoride channel function. In terms of biological role, fluoride-specific ion channel. Important for reducing fluoride concentration in the cell, thus reducing its toxicity. The protein is Fluoride-specific ion channel FluC of Pseudomonas syringae pv. tomato (strain ATCC BAA-871 / DC3000).